Reading from the N-terminus, the 426-residue chain is Serine--tRNA ligase (426 aa).

231-233 (TSE) provides a ligand contact to L-serine. 262–264 (RSE) contacts ATP. Glutamate 285 serves as a coordination point for L-serine. 349-352 (EISS) serves as a coordination point for ATP. Residue serine 385 coordinates L-serine.

It belongs to the class-II aminoacyl-tRNA synthetase family. Type-1 seryl-tRNA synthetase subfamily. As to quaternary structure, homodimer. The tRNA molecule binds across the dimer.

It localises to the cytoplasm. The enzyme catalyses tRNA(Ser) + L-serine + ATP = L-seryl-tRNA(Ser) + AMP + diphosphate + H(+). The catalysed reaction is tRNA(Sec) + L-serine + ATP = L-seryl-tRNA(Sec) + AMP + diphosphate + H(+). The protein operates within aminoacyl-tRNA biosynthesis; selenocysteinyl-tRNA(Sec) biosynthesis; L-seryl-tRNA(Sec) from L-serine and tRNA(Sec): step 1/1. In terms of biological role, catalyzes the attachment of serine to tRNA(Ser). Is also able to aminoacylate tRNA(Sec) with serine, to form the misacylated tRNA L-seryl-tRNA(Sec), which will be further converted into selenocysteinyl-tRNA(Sec). This chain is Serine--tRNA ligase, found in Legionella pneumophila (strain Corby).